Consider the following 73-residue polypeptide: Large ribosomal subunit protein eL20 (73 aa).

This sequence belongs to the eukaryotic ribosomal protein eL20 family. Part of the 50S ribosomal subunit. Binds 23S rRNA.

The polypeptide is Large ribosomal subunit protein eL20 (Methanococcus aeolicus (strain ATCC BAA-1280 / DSM 17508 / OCM 812 / Nankai-3)).